We begin with the raw amino-acid sequence, 400 residues long: MACAPGALGHRALWAVAWGLLLLVPVLAGAQRGRKKVVHVLEGESGSVVVQTAPGQVVSHRGGTIVLPCRYHYEAAAHGHDGVRLKWTKVVDPLAFADVFVALGPQHRAFGPYRGRAELQNDGPGDASLVLRNVTLQDYGRYECEVTNELEDDVGMVKLDLEGVVFPYHPRGGRYKMTFVEAQRACAEQDGILASAEQLHAAWRDGLDWCNAGWLRDGSVQYPVSHAREPCGGTGSTGAGGGTNGGVRNYGYRHNAEERYDAFCFTSNLPGRVFFLKPLRPVALAGAVRACAARGATVAKVGQLFAAWKLQLLDRCTAGWLADGSARYPIVNPRTRCGGPRPGVRSLGFPDASRRLFGVYCYRAPGAPDPAPGGWGWGWAGGGGWAGGSRDPAAWTPLRV.

The N-terminal stretch at 1–30 (MACAPGALGHRALWAVAWGLLLLVPVLAGA) is a signal peptide. Residues 47–155 (SVVVQTAPGQ…VTNELEDDVG (109 aa)) form the Ig-like C2-type domain. Cystine bridges form between C69–C144, C186–C264, C210–C231, C291–C361, and C316–C337. Residue N133 is glycosylated (N-linked (GlcNAc...) asparagine). Link domains are found at residues 164–266 (VVFP…FCFT) and 271–363 (GRVF…YCYR).

This sequence belongs to the HAPLN family. As to expression, expressed predominantly in brain where it is found mainly throughout the midbrain and hindbrain in a perineuronal net pattern.

The protein localises to the secreted. It is found in the extracellular space. It localises to the extracellular matrix. In terms of biological role, essential for the proper localization of brevican (BCAN), mainly as a perineuronal nets (PNNs)-type deposition in the brainstem and cerebellum thereby playing a key role in the formation and structural organization of PNNs. Contributes to the formation and transmission of inhibitory GABAergic synapses between Purkinje cells and deep cerebellar nuclei neurons. The polypeptide is Hyaluronan and proteoglycan link protein 4 (Hapln4) (Mus musculus (Mouse)).